The sequence spans 403 residues: PP2A regulatory subunit TAP46 (403 aa).

Disordered regions lie at residues 158–184 (ERRG…LDDD) and 351–403 (ANSS…TPCG). Acidic residues-rich tracts occupy residues 174–184 (ETEEDDVLDDD) and 366–375 (EDDEEDDDDA). Over residues 376–391 (AQDKARAWDDWKDDNP) the composition is skewed to basic and acidic residues.

It belongs to the IGBP1/TAP42 family.

Functionally, involved in the regulation of the TOR signaling pathway. Seems to act as a regulator of PP2A catalytic activity. The protein is PP2A regulatory subunit TAP46 of Nicotiana tabacum (Common tobacco).